Consider the following 303-residue polypeptide: Signal recognition particle receptor FtsY (303 aa).

GTP is bound by residues 108–115, 190–194, and 254–257; these read GVNGAGKT, DTAGR, and TKLD.

This sequence belongs to the GTP-binding SRP family. FtsY subfamily. As to quaternary structure, part of the signal recognition particle protein translocation system, which is composed of SRP and FtsY. SRP is a ribonucleoprotein composed of Ffh and a 4.5S RNA molecule.

The protein localises to the cell inner membrane. The protein resides in the cytoplasm. It catalyses the reaction GTP + H2O = GDP + phosphate + H(+). In terms of biological role, involved in targeting and insertion of nascent membrane proteins into the cytoplasmic membrane. Acts as a receptor for the complex formed by the signal recognition particle (SRP) and the ribosome-nascent chain (RNC). Interaction with SRP-RNC leads to the transfer of the RNC complex to the Sec translocase for insertion into the membrane, the hydrolysis of GTP by both Ffh and FtsY, and the dissociation of the SRP-FtsY complex into the individual components. The protein is Signal recognition particle receptor FtsY of Rickettsia bellii (strain RML369-C).